The following is a 291-amino-acid chain: 4-diphosphocytidyl-2-C-methyl-D-erythritol kinase (291 aa).

Lysine 10 is an active-site residue. 94-104 (PVSAGLAGGSS) contacts ATP. Aspartate 136 is an active-site residue.

Belongs to the GHMP kinase family. IspE subfamily.

The catalysed reaction is 4-CDP-2-C-methyl-D-erythritol + ATP = 4-CDP-2-C-methyl-D-erythritol 2-phosphate + ADP + H(+). Its pathway is isoprenoid biosynthesis; isopentenyl diphosphate biosynthesis via DXP pathway; isopentenyl diphosphate from 1-deoxy-D-xylulose 5-phosphate: step 3/6. In terms of biological role, catalyzes the phosphorylation of the position 2 hydroxy group of 4-diphosphocytidyl-2C-methyl-D-erythritol. The sequence is that of 4-diphosphocytidyl-2-C-methyl-D-erythritol kinase from Listeria welshimeri serovar 6b (strain ATCC 35897 / DSM 20650 / CCUG 15529 / CIP 8149 / NCTC 11857 / SLCC 5334 / V8).